The chain runs to 301 residues: Acetyl-coenzyme A carboxylase carboxyl transferase subunit beta (301 aa).

The CoA carboxyltransferase N-terminal domain maps to 23-292 (VWTKCDSCGQ…PSPDEPRESV (270 aa)). Zn(2+) is bound by residues C27, C30, C46, and C49. Residues 27–49 (CDSCGQVLYRAELERNLEVCPKC) form a C4-type zinc finger. Positions 280-301 (LPAPSPDEPRESVVVPDQEPEA) are disordered.

It belongs to the AccD/PCCB family. Acetyl-CoA carboxylase is a heterohexamer composed of biotin carboxyl carrier protein (AccB), biotin carboxylase (AccC) and two subunits each of ACCase subunit alpha (AccA) and ACCase subunit beta (AccD). Requires Zn(2+) as cofactor.

Its subcellular location is the cytoplasm. The enzyme catalyses N(6)-carboxybiotinyl-L-lysyl-[protein] + acetyl-CoA = N(6)-biotinyl-L-lysyl-[protein] + malonyl-CoA. It participates in lipid metabolism; malonyl-CoA biosynthesis; malonyl-CoA from acetyl-CoA: step 1/1. In terms of biological role, component of the acetyl coenzyme A carboxylase (ACC) complex. Biotin carboxylase (BC) catalyzes the carboxylation of biotin on its carrier protein (BCCP) and then the CO(2) group is transferred by the transcarboxylase to acetyl-CoA to form malonyl-CoA. The protein is Acetyl-coenzyme A carboxylase carboxyl transferase subunit beta of Enterobacter sp. (strain 638).